We begin with the raw amino-acid sequence, 808 residues long: Dynamin-related protein 3A (808 aa).

The segment at 1 to 31 is disordered; sequence MTIEEVSGETPPSTPPSSSTPSPSSSTTNAA. The span at 16–28 shows a compositional bias: low complexity; the sequence is PSSSTPSPSSSTT. The Dynamin-type G domain maps to 56 to 330; sequence TIALPQVVVV…LVQHIKVLLP (275 aa). The segment at 66–73 is G1 motif; that stretch reads GSQSSGKS. 66–73 contacts GTP; that stretch reads GSQSSGKS. The segment at 92–94 is G2 motif; that stretch reads CTR. Positions 172–175 are G3 motif; it reads DLPG. GTP-binding positions include 172–176 and 241–244; these read DLPGI and TKLD. Positions 241–244 are G4 motif; the sequence is TKLD. A G5 motif region spans residues 271–274; it reads VNRC. The tract at residues 548-578 is disordered; sequence IPHPVARPKDTVEPDRTSSSTSQVKSRSFLG. The segment covering 554-563 has biased composition (basic and acidic residues); sequence RPKDTVEPDR. Positions 564–575 are enriched in low complexity; that stretch reads TSSSTSQVKSRS. One can recognise a GED domain in the interval 670 to 761; sequence IQITKLLLRS…TLDELPLEAD (92 aa). Positions 774-808 are disordered; sequence LTSSKYSTSSSYSASPSTTRRSRRAGDQHQNGYGF. Over residues 775 to 792 the composition is skewed to low complexity; the sequence is TSSKYSTSSSYSASPSTT.

This sequence belongs to the TRAFAC class dynamin-like GTPase superfamily. Dynamin/Fzo/YdjA family. In terms of assembly, homooligomer. Interacts with ARC5 on peroxisomes and ELM1 on mitochondria. Ubiquitous. Preferentially expressed in flowers.

Its subcellular location is the mitochondrion. The protein resides in the peroxisome. Functionally, involved in the control of mitochondrial and peroxisomal division and morphology. In association with PEX11C, PEX11D, PEX11E and FIS1B, is involved in cell cycle-associated constitutive self-replication of preexisting peroxisomes. The protein is Dynamin-related protein 3A (DRP3A) of Arabidopsis thaliana (Mouse-ear cress).